The following is a 554-amino-acid chain: Phosphomethylpyrimidine synthase (554 aa).

Substrate is bound by residues N188, M217, Y246, H282, 302-304, 343-346, and E382; these read SRG and DGLR. H386 is a Zn(2+) binding site. Y409 contacts substrate. A Zn(2+)-binding site is contributed by H450. The [4Fe-4S] cluster site is built by C530, C533, and C538.

It belongs to the ThiC family. Homodimer. It depends on [4Fe-4S] cluster as a cofactor.

The catalysed reaction is 5-amino-1-(5-phospho-beta-D-ribosyl)imidazole + S-adenosyl-L-methionine = 4-amino-2-methyl-5-(phosphooxymethyl)pyrimidine + CO + 5'-deoxyadenosine + formate + L-methionine + 3 H(+). The protein operates within cofactor biosynthesis; thiamine diphosphate biosynthesis. Functionally, catalyzes the synthesis of the hydroxymethylpyrimidine phosphate (HMP-P) moiety of thiamine from aminoimidazole ribotide (AIR) in a radical S-adenosyl-L-methionine (SAM)-dependent reaction. This Coxiella burnetii (strain Dugway 5J108-111) protein is Phosphomethylpyrimidine synthase.